The sequence spans 472 residues: RING-H2 finger protein ATL13 (472 aa).

Residues 51–71 (ILLIIIILSIIFFISGLLHLL) traverse the membrane as a helical segment. Residues 134 to 176 (CAVCLCEFETEDKLRLLPKCSHAFHMDCIDTWLLSHSTCPLCR) form an RING-type; atypical zinc finger. A disordered region spans residues 320 to 340 (VSTKKQSSKNRGLPGHRTAMS).

It belongs to the RING-type zinc finger family. ATL subfamily.

Its subcellular location is the membrane. It catalyses the reaction S-ubiquitinyl-[E2 ubiquitin-conjugating enzyme]-L-cysteine + [acceptor protein]-L-lysine = [E2 ubiquitin-conjugating enzyme]-L-cysteine + N(6)-ubiquitinyl-[acceptor protein]-L-lysine.. Its pathway is protein modification; protein ubiquitination. In Arabidopsis thaliana (Mouse-ear cress), this protein is RING-H2 finger protein ATL13 (ATL13).